A 287-amino-acid chain; its full sequence is Elongation factor Ts (287 aa).

The segment at 80-83 (TDFL) is involved in Mg(2+) ion dislocation from EF-Tu.

It belongs to the EF-Ts family.

The protein resides in the cytoplasm. Functionally, associates with the EF-Tu.GDP complex and induces the exchange of GDP to GTP. It remains bound to the aminoacyl-tRNA.EF-Tu.GTP complex up to the GTP hydrolysis stage on the ribosome. In Pseudomonas fluorescens (strain SBW25), this protein is Elongation factor Ts.